The following is a 397-amino-acid chain: Mannosylglycerate synthase (397 aa).

GDP-alpha-D-mannose-binding positions include 7–11, isoleucine 35, glutamine 66, lysine 76, aspartate 100, and 100–101; these read PFKHE and DA. An a divalent metal cation-binding site is contributed by aspartate 102. (R)-glycerate contacts are provided by residues arginine 131 and 136–139; that span reads AMIT. Leucine 163 and aspartate 192 together coordinate GDP-alpha-D-mannose. Histidine 217 provides a ligand contact to a divalent metal cation. Residues arginine 218 and tyrosine 220 each coordinate GDP-alpha-D-mannose.

It belongs to the glycosyltransferase 78 family. In terms of assembly, homotetramer. Dimer of dimers. Requires Mg(2+) as cofactor. Ca(2+) is required as a cofactor. The cofactor is Mn(2+). It depends on Ni(2+) as a cofactor. Co(2+) serves as cofactor.

It carries out the reaction (R)-glycerate + GDP-alpha-D-mannose = (2R)-2-O-(alpha-D-mannosyl)-glycerate + GDP + H(+). Inhibited by GDP. Involved in the biosynthesis of the stress protectant 2-O-alpha-D-mannosyl glycerate (MG) which is produced in response to growth at supraoptimal temperature and salinity, and protects several enzymes against inactivation by temperature, freeze-drying and osmotic stress. Catalyzes the condensation of alpha-GDP-D-mannose (GDP-Man) with D-glycerate to produce alpha-mannosyl-D-glycerate. It is specific for GDP-Man, but it can also use alpha-GDP-D-glucose (GDP-Glc), beta-GDP-D-fructose, alpha-UDP-D-mannose and alpha-UDP-D-glucose as sugar donors. It is specific for D-glycerate, but it can also use D-lactate and glycolate as sugar acceptors. This reaction occurs with a net retention of anomeric configuration; the newly formed glycosidic linkage has the same alpha configuration as the sugar donor. The chain is Mannosylglycerate synthase (mgs) from Rhodothermus marinus (Rhodothermus obamensis).